The sequence spans 357 residues: Glutamate 5-kinase (357 aa).

An ATP-binding site is contributed by K7. 3 residues coordinate substrate: S43, D130, and N142. An ATP-binding site is contributed by 162-163 (TD). The PUA domain maps to 270–347 (QGELTLDAGA…PAAGPSPVVV (78 aa)).

This sequence belongs to the glutamate 5-kinase family.

The protein localises to the cytoplasm. The enzyme catalyses L-glutamate + ATP = L-glutamyl 5-phosphate + ADP. The protein operates within amino-acid biosynthesis; L-proline biosynthesis; L-glutamate 5-semialdehyde from L-glutamate: step 1/2. Its function is as follows. Catalyzes the transfer of a phosphate group to glutamate to form L-glutamate 5-phosphate. This chain is Glutamate 5-kinase, found in Parasynechococcus marenigrum (strain WH8102).